Consider the following 1319-residue polypeptide: Girdin homolog (1319 aa).

Residues 6-118 (ENWSHPLAFW…KLLLLLLGCA (113 aa)) form the Calponin-homology (CH) domain. 3 coiled-coil regions span residues 141–173 (ELAA…TDEV), 218–690 (TSEL…ADLI), and 732–1096 (KRER…KKST). The interval 166–222 (KMKETDEVGGGGGSIEDVDSDDMESSTTSSSNGEIAIKQQDQSFLMSRSTSPTSELR) is disordered. Residues 204-222 (QQDQSFLMSRSTSPTSELR) are compositionally biased toward polar residues. 2 disordered regions span residues 1112–1236 (INRR…SPAH) and 1289–1308 (NVNL…LKPN). Over residues 1118–1131 (TSNGGSTTEDSSVY) the composition is skewed to polar residues.

This sequence belongs to the CCDC88 family. Expressed in AQR and PQR gas-sensing neurons in hermaphrodites (at protein level).

The protein localises to the cytoplasm. Its subcellular location is the cytoskeleton. It is found in the cilium basal body. It localises to the microtubule organizing center. The protein resides in the centrosome. The protein localises to the centriole. Its function is as follows. Scaffolding protein that plays a role in ciliogenesis, cilium positioning and dendrite anchoring in sensory amphid neurons including AWB, AWA, AWC, ADL and ASI, the phasmid neurons PHA and PHB and the gas sensing neurons AQR, PQR, URX and BAG. Its role in cilium positioning may be through regulation of the localization of cell adhesion proteins such as the apical junction protein ajm-1, and the ciliary scaffolding protein Rootletin/che-10. Plays a more prominent role in regulating dendrite morphogenesis in AQR than in PQR neurons. Regulates localization of hmr-1 to the distal AQR dendrite. During embryonic elongation, required for the anchoring of URX and BAG dendrites to the presumptive nose. The chain is Girdin homolog from Caenorhabditis elegans.